A 301-amino-acid chain; its full sequence is MSVRELVVLGTASQVPTRHRNHNGYLLRWDGEGILFDPGEGTQRQMLRAGVAAHDLNRICVTHFHGDHSLGLAGVIQRINLDRVPHEITAHYPRSGQRFFERLRYATAYRETVALTEVPVAADGPLAVTPAYTLDARRLSHPVESYGYRLTEPDGRRMLPERLAAHGITGPDVGRIQRDGSLGGVALDEVSEVRRGQRFAFVMDTRLCEGVHALAEDSDLLVIESTFLDEDETLATDHGHLTAGQAARVARDAGVRHLVLTHFSQRYSDPEEFGRQARAAGYAGELTVARDLTRVPVPKRR.

Residues His63, His65, Asp67, His68, His141, Asp204, and His262 each contribute to the Zn(2+) site. Asp67 (proton acceptor) is an active-site residue.

Belongs to the RNase Z family. Homodimer. Requires Zn(2+) as cofactor.

The enzyme catalyses Endonucleolytic cleavage of RNA, removing extra 3' nucleotides from tRNA precursor, generating 3' termini of tRNAs. A 3'-hydroxy group is left at the tRNA terminus and a 5'-phosphoryl group is left at the trailer molecule.. In terms of biological role, zinc phosphodiesterase, which displays some tRNA 3'-processing endonuclease activity. Probably involved in tRNA maturation, by removing a 3'-trailer from precursor tRNA. This chain is Ribonuclease Z, found in Streptomyces coelicolor (strain ATCC BAA-471 / A3(2) / M145).